A 496-amino-acid polypeptide reads, in one-letter code: Cyclin-dependent kinase 16 (496 aa).

The interval 1-97 (MDRMKKIKRQ…TSSDEVQSPV (97 aa)) is disordered. Serine 12 carries the post-translational modification Phosphoserine; by BRSK2. Phosphoserine is present on residues serine 36, serine 42, serine 64, serine 65, serine 78, serine 82, and serine 89. The segment covering 69–78 (IVHEDLKMGS) has biased composition (basic and acidic residues). A compositionally biased stretch (polar residues) spans 83–93 (DQASATSSDEV). Position 95 is a phosphoserine; by CDK5 (serine 95). Residues serine 110, serine 119, serine 138, serine 146, serine 153, and serine 155 each carry the phosphoserine modification. Residues 165–446 (YIKLDKLGEG…AEDAMKHPFF (282 aa)) form the Protein kinase domain. Residues 171–179 (LGEGTYATV) and lysine 194 contribute to the ATP site. Threonine 175 carries the post-translational modification Phosphothreonine. The active-site Proton acceptor is the aspartate 286. Residue threonine 380 is modified to Phosphothreonine. A phosphoserine mark is found at serine 391, serine 478, and serine 480.

It belongs to the protein kinase superfamily. CMGC Ser/Thr protein kinase family. CDC2/CDKX subfamily. In terms of assembly, found in a complex containing CABLES1, CDK17 and TDRD7. Interacts with BRSK2. Identified in a complex with NSF, syntaxin-1, synaptotagmin, SYN1, SYP and CDK5R1. Interacts with YWHAH, YWHAQ and YWHAZ. Interacts with CCNY; this interaction increases the CDK16 kinase activity. Interacts with CCNYL1; this interaction mutually increases the stability of CDK16 and CCNYL1 and increases the kinase activity of CDK16. Interacts with NSF. In terms of processing, phosphorylation of CDK16 is essential for the binding of CCNY, but also essential for the regulation of CDK16 kinase activity. Phosphorylation of CDK16 is essential for the binding of CCNYl1, but also essential for the regulation of CDK16 kinase activity. Ser-146 and Ser-153 are the most critical sites for the binding of CCNYL1 and for modulating CDK16 kinase activity. Phosphorylation at Ser-153 inhibits kinase activity. Detected in pancreas islets (at protein level). Detected in brain and pancreas.

The protein localises to the cytoplasm. It is found in the cytoplasmic vesicle. Its subcellular location is the secretory vesicle. The protein resides in the cell membrane. It localises to the synapse. The protein localises to the synaptosome. The catalysed reaction is L-seryl-[protein] + ATP = O-phospho-L-seryl-[protein] + ADP + H(+). It carries out the reaction L-threonyl-[protein] + ATP = O-phospho-L-threonyl-[protein] + ADP + H(+). Its function is as follows. Protein kinase that plays a role in vesicle-mediated transport processes and exocytosis. Regulates GH1 release by brain neurons. Phosphorylates NSF, and thereby regulates NSF oligomerization. Required for normal spermatogenesis. Regulates neuron differentiation and dendrite development. Plays a role in the regulation of insulin secretion in response to changes in blood glucose levels. Can phosphorylate CCNY at 'Ser-336' (in vitro). This is Cyclin-dependent kinase 16 (CDK16) from Homo sapiens (Human).